The primary structure comprises 338 residues: D-erythrose-4-phosphate dehydrogenase (338 aa).

11 to 12 (RI) is a binding site for NAD(+). Residues 153–155 (SCT), arginine 199, 212–213 (TK), and arginine 235 contribute to the substrate site. The active-site Nucleophile is cysteine 154. Position 317 (asparagine 317) interacts with NAD(+).

Belongs to the glyceraldehyde-3-phosphate dehydrogenase family. Epd subfamily. As to quaternary structure, homotetramer.

It localises to the cytoplasm. It catalyses the reaction D-erythrose 4-phosphate + NAD(+) + H2O = 4-phospho-D-erythronate + NADH + 2 H(+). It participates in cofactor biosynthesis; pyridoxine 5'-phosphate biosynthesis; pyridoxine 5'-phosphate from D-erythrose 4-phosphate: step 1/5. In terms of biological role, catalyzes the NAD-dependent conversion of D-erythrose 4-phosphate to 4-phosphoerythronate. The chain is D-erythrose-4-phosphate dehydrogenase from Shewanella oneidensis (strain ATCC 700550 / JCM 31522 / CIP 106686 / LMG 19005 / NCIMB 14063 / MR-1).